The chain runs to 1213 residues: A disintegrin and metalloproteinase with thrombospondin motifs 19 (1213 aa).

Positions 1–27 are cleaved as a signal peptide; it reads MGKNREMRLTHICCCCLLYQLGFLSNG. A propeptide spanning residues 28 to 322 is cleaved from the precursor; sequence IVSELQFAPD…KIAESGRGKR (295 aa). Disordered regions lie at residues 49–161 and 192–215; these read WRRE…PPPA and FLAP…AASA. Residues 52–71 show a composition bias toward gly residues; the sequence is EPVDPAGGSGGSADPGWVRG. A compositionally biased stretch (acidic residues) spans 110–119; it reads RPPPPSEGEE. Low complexity predominate over residues 120 to 139; sequence DEELESQELPRGSSGAAALS. A compositionally biased stretch (pro residues) spans 140–155; the sequence is PGAPASWQPPPPPQPP. N-linked (GlcNAc...) asparagine glycosylation is present at N266. A Cysteine switch motif is present at residues 298–305; that stretch reads HYCGIISD. Residue C300 coordinates Zn(2+). The Peptidase M12B domain occupies 331-551; the sequence is YNIETVVVAD…KASNCLLQTN (221 aa). Disulfide bonds link C407/C472, C447/C454, C466/C546, C505/C530, C575/C599, C586/C607, C594/C626, C620/C631, C651/C686, C655/C691, and C666/C676. H488 is a binding site for Zn(2+). Residue E489 is part of the active site. The Zn(2+) site is built by H492 and H498. The Disintegrin domain maps to 552-639; that stretch reads PQSVNSVMVP…ECTSRTSAPE (88 aa). Positions 640 to 692 constitute a TSP type-1 1 domain; sequence HLAGEWSLWSPCSRTCSAGISSRERKCPGLDSEARDCNGPRKQYRICENPPCP. The tract at residues 797-920 is spacer; sequence IIKGDFNHTR…PENQSSKAPE (124 aa). Residues N803, N913, N955, and N1015 are each glycosylated (N-linked (GlcNAc...) asparagine). TSP type-1 domains lie at 921–981, 982–1043, 1045–1089, and 1093–1150; these read PLFM…NEQP, CQTR…QDCM, VWEA…EDCE, and KCYV…QPCN. 3 disulfide bridges follow: C994-C1037, C998-C1042, and C1009-C1026. One can recognise a PLAC domain in the interval 1166 to 1205; it reads LTFKCLGDQWPVYCRVIREKNLCQDMRWYQRCCETCRDFY.

Zn(2+) is required as a cofactor. In terms of processing, the precursor is cleaved by a furin endopeptidase. Post-translationally, glycosylated. Can be O-fucosylated by POFUT2 on a serine or a threonine residue found within the consensus sequence C1-X(2)-(S/T)-C2-G of the TSP type-1 repeat domains where C1 and C2 are the first and second cysteine residue of the repeat, respectively. Fucosylated repeats can then be further glycosylated by the addition of a beta-1,3-glucose residue by the glucosyltransferase, B3GALTL. Fucosylation mediates the efficient secretion of ADAMTS family members. Can also be C-glycosylated with one or two mannose molecules on tryptophan residues within the consensus sequence W-X-X-W of the TPRs, and N-glycosylated. These other glycosylations can also facilitate secretion. In terms of tissue distribution, expressed in fetal lung, but not in any adult tissues examined. Expression was detected in an osteosarcoma cDNA library.

It is found in the secreted. It localises to the extracellular space. The protein resides in the extracellular matrix. The sequence is that of A disintegrin and metalloproteinase with thrombospondin motifs 19 (ADAMTS19) from Homo sapiens (Human).